The chain runs to 34 residues: Beta/mu-theraphotoxin-Pe1a (34 aa).

3 disulfides stabilise this stretch: Cys2–Cys16, Cys9–Cys21, and Cys15–Cys28.

It belongs to the neurotoxin 10 (Hwtx-1) family. 54 (ProTx-1) subfamily. Expressed by the venom gland.

The protein localises to the secreted. Its function is as follows. Ion channel impairing toxin that inhibits voltage-gated sodium channels. The recombinantly expressed toxin shows a weak activity against Nav1.7/SCN9A (25% inhibition at 10 uM), and shifts the voltage dependence of channel activation to more depolarized potentials. The polypeptide is Beta/mu-theraphotoxin-Pe1a (Phormingochilus everetti (Malaysian purple earth tiger tarantula)).